We begin with the raw amino-acid sequence, 284 residues long: Bifunctional protein FolD (284 aa).

166–168 (GAS) serves as a coordination point for NADP(+).

It belongs to the tetrahydrofolate dehydrogenase/cyclohydrolase family. In terms of assembly, homodimer.

The enzyme catalyses (6R)-5,10-methylene-5,6,7,8-tetrahydrofolate + NADP(+) = (6R)-5,10-methenyltetrahydrofolate + NADPH. It catalyses the reaction (6R)-5,10-methenyltetrahydrofolate + H2O = (6R)-10-formyltetrahydrofolate + H(+). It participates in one-carbon metabolism; tetrahydrofolate interconversion. In terms of biological role, catalyzes the oxidation of 5,10-methylenetetrahydrofolate to 5,10-methenyltetrahydrofolate and then the hydrolysis of 5,10-methenyltetrahydrofolate to 10-formyltetrahydrofolate. In Nitrosococcus oceani (strain ATCC 19707 / BCRC 17464 / JCM 30415 / NCIMB 11848 / C-107), this protein is Bifunctional protein FolD.